The following is a 187-amino-acid chain: Aminodeoxychorismate synthase component 2 (187 aa).

Positions 1 to 187 constitute a Glutamine amidotransferase type-1 domain; it reads MILLIDNYDS…HQLLANFLHR (187 aa). Catalysis depends on residues C79, H168, and E170.

Monomer. Heterodimer consisting of two non-identical subunits: a glutamine amidotransferase subunit (PabA) and a aminodeoxychorismate synthase subunit (PabB).

It carries out the reaction chorismate + L-glutamine = 4-amino-4-deoxychorismate + L-glutamate. It participates in cofactor biosynthesis; tetrahydrofolate biosynthesis; 4-aminobenzoate from chorismate: step 1/2. Its activity is regulated as follows. Inhibited by 6-diazo-5-oxo-L-norleucine (DON). The inhibition is competitive with glutamine, but uncompetitive with chorismate. Functionally, part of a heterodimeric complex that catalyzes the two-step biosynthesis of 4-amino-4-deoxychorismate (ADC), a precursor of p-aminobenzoate (PABA) and tetrahydrofolate. In the first step, a glutamine amidotransferase (PabA) generates ammonia as a substrate that, along with chorismate, is used in the second step, catalyzed by aminodeoxychorismate synthase (PabB) to produce ADC. PabA converts glutamine into glutamate only in the presence of stoichiometric amounts of PabB. The sequence is that of Aminodeoxychorismate synthase component 2 from Escherichia coli (strain K12).